The primary structure comprises 318 residues: Bis(5'-nucleosyl)-tetraphosphatase, symmetrical (318 aa).

Residues 269–318 (PGREVTGPAPVARAPRRPRERLGRQRSRGNRGNAGNTAVPAKPPVDTPQD) form a disordered region. Positions 282–297 (APRRPRERLGRQRSRG) are enriched in basic residues. The segment covering 309 to 318 (AKPPVDTPQD) has biased composition (pro residues).

Belongs to the Ap4A hydrolase family.

The enzyme catalyses P(1),P(4)-bis(5'-adenosyl) tetraphosphate + H2O = 2 ADP + 2 H(+). Hydrolyzes diadenosine 5',5'''-P1,P4-tetraphosphate to yield ADP. This Xanthomonas oryzae pv. oryzae (strain PXO99A) protein is Bis(5'-nucleosyl)-tetraphosphatase, symmetrical.